Here is a 204-residue protein sequence, read N- to C-terminus: uncharacterized protein (204 aa).

His-9 (tele-phosphohistidine intermediate) is an active-site residue. Residue Glu-86 is the Proton donor/acceptor of the active site.

Belongs to the phosphoglycerate mutase family.

This is an uncharacterized protein from Acanthamoeba polyphaga (Amoeba).